We begin with the raw amino-acid sequence, 402 residues long: MTAASEHLVLVLNSGSSSIKYQLVDPETGEVSAAGLVERIGEDDSAIEHRCGARTIGHEGRIPDHRAGLERVFEMFAETGFDLAGAGLRAVGHRVVHGGEMFHEPTLVTDEVVAAIADFAELAPLHNPANVTGIENARRLLPGVPQVAVFDTAFFHGLPDAAKTYAIDAKIAAEYGIRRYGFHGISHEYVSGRVAEVLDLDPARLRQIVFHLGNGASASAVRGGSPIDTSMGLTPLEGLVMGTRGGDLDPGILGHLARAAGFDVDRIDKLLNREAGLKGMAGVNDFRELRRLIDEGDAAAKLAYDVYVHRLRRYLGAYLIALGGVDAITFTAGVGENSADVRADALAGLENFGIAVDPARNTAKDRGARVISPPAAPVTVLVVPTNEELAIARAADRLVAAG.

Position 13 (N13) interacts with Mg(2+). Residue K20 coordinates ATP. Substrate is bound at residue R94. Catalysis depends on D151, which acts as the Proton donor/acceptor. ATP-binding positions include 211–215 (HLGNG), 285–287 (DFR), and 333–337 (GVGEN). A Mg(2+)-binding site is contributed by E387.

The protein belongs to the acetokinase family. In terms of assembly, homodimer. It depends on Mg(2+) as a cofactor. Mn(2+) is required as a cofactor.

It is found in the cytoplasm. It carries out the reaction acetate + ATP = acetyl phosphate + ADP. It participates in metabolic intermediate biosynthesis; acetyl-CoA biosynthesis; acetyl-CoA from acetate: step 1/2. In terms of biological role, catalyzes the formation of acetyl phosphate from acetate and ATP. Can also catalyze the reverse reaction. The chain is Acetate kinase from Nocardia farcinica (strain IFM 10152).